A 218-amino-acid polypeptide reads, in one-letter code: Replication protein RepB (218 aa).

The disordered stretch occupies residues 1 to 26 (MKSESKIDWTVPRPNKNPKTKQPYKR). Residues 16–26 (KNPKTKQPYKR) show a composition bias toward basic residues.

This sequence belongs to the Gram-positive plasmids replication protein type 2 family.

Its function is as follows. Is essential for plasmid replication. Nicks the positive strand at the plus origin of replication. The protein is Replication protein RepB (repB) of Lactiplantibacillus plantarum (Lactobacillus plantarum).